A 156-amino-acid chain; its full sequence is Small ribosomal subunit protein uS7 (156 aa).

It belongs to the universal ribosomal protein uS7 family. Part of the 30S ribosomal subunit. Contacts proteins S9 and S11.

Functionally, one of the primary rRNA binding proteins, it binds directly to 16S rRNA where it nucleates assembly of the head domain of the 30S subunit. Is located at the subunit interface close to the decoding center, probably blocks exit of the E-site tRNA. The protein is Small ribosomal subunit protein uS7 of Nocardioides sp. (strain ATCC BAA-499 / JS614).